A 365-amino-acid chain; its full sequence is Dihydroorotate dehydrogenase (quinone) (365 aa).

FMN is bound by residues 61-65 and serine 85; that span reads AGFDK. Lysine 65 serves as a coordination point for substrate. 110–114 serves as a coordination point for substrate; it reads NRMGF. Residues asparagine 139 and asparagine 170 each coordinate FMN. Residue asparagine 170 coordinates substrate. Serine 173 functions as the Nucleophile in the catalytic mechanism. Asparagine 175 lines the substrate pocket. 2 residues coordinate FMN: lysine 214 and serine 242. 243–244 is a substrate binding site; that stretch reads NT. Residues glycine 266, glycine 295, and 316-317 each bind FMN; that span reads YS.

This sequence belongs to the dihydroorotate dehydrogenase family. Type 2 subfamily. As to quaternary structure, monomer. The cofactor is FMN.

It localises to the cell membrane. The catalysed reaction is (S)-dihydroorotate + a quinone = orotate + a quinol. The protein operates within pyrimidine metabolism; UMP biosynthesis via de novo pathway; orotate from (S)-dihydroorotate (quinone route): step 1/1. Its function is as follows. Catalyzes the conversion of dihydroorotate to orotate with quinone as electron acceptor. The chain is Dihydroorotate dehydrogenase (quinone) from Bradyrhizobium diazoefficiens (strain JCM 10833 / BCRC 13528 / IAM 13628 / NBRC 14792 / USDA 110).